We begin with the raw amino-acid sequence, 3256 residues long: Proliferation marker protein Ki-67 (3256 aa).

The FHA domain occupies 27–76 (CLFGRGIECDIRIQLPVVSKQHCKIEIHEQEAILHNFSSTNPTQVNGSVI). Residues 101 to 199 (SLQNGRKSTE…RNGRNAADPI (99 aa)) are disordered. Over residues 107-122 (KSTEFPRKIREQEPAR) the composition is skewed to basic and acidic residues. A phosphoserine mark is found at Ser125, Ser128, and Ser166. The span at 161–173 (NVKEDSTADDSKD) shows a compositional bias: basic and acidic residues. Residues 174 to 183 (SVAQGTTNVH) show a composition bias toward polar residues. Residue Lys245 forms a Glycyl lysine isopeptide (Lys-Gly) (interchain with G-Cter in SUMO2) linkage. 3 positions are modified to phosphoserine: Ser264, Ser296, and Ser308. 2 disordered regions span residues 271–426 (ATEK…RGSI) and 513–542 (RPEL…LVMH). The segment covering 314-324 (DQNKGKGRDVE) has biased composition (basic and acidic residues). Phosphothreonine is present on residues Thr328 and Thr347. Residues 349-358 (VQYSQQQNSP) are compositionally biased toward polar residues. 3 positions are modified to phosphoserine: Ser352, Ser357, and Ser374. At Thr401 the chain carries Phosphothreonine. A Phosphoserine modification is found at Ser411. Polar residues predominate over residues 414–425 (KPENLSSKTRGS). A positively charged patch (CP) region spans residues 495–678 (ESEGIPLKRR…AKQTQTKVIK (184 aa)). The PP1-binding domain occupies 502–549 (KRRRVSFGGHLRPELFDENLPPNTPLKRGEAPTKRKSLVMHTPPVLKK). Position 538 is a phosphoserine (Ser538). The residue at position 543 (Thr543) is a Phosphothreonine. The segment at 575–632 (SLVISPPAPSPRKTPVASDQRRRSCKTAPASSSKSQTEVPKRGGRKSGNLPSKRVSIS) is disordered. Phosphoserine is present on residues Ser579 and Ser584. Polar residues predominate over residues 603–612 (PASSSKSQTE). At Ser648 the chain carries Phosphoserine. Residues 674–707 (TKVIKHGPQRSMNKRQRRPATPKKPVGEVHSQFS) form a disordered region. Over residues 676-694 (VIKHGPQRSMNKRQRRPAT) the composition is skewed to basic residues. Thr761 carries the phosphothreonine modification. Positions 853–886 (SLETKTSDTETEPSKTVSTANRSGRSTEFRNIQK) are disordered. Ser859 is modified (phosphoserine). Over residues 866–882 (SKTVSTANRSGRSTEFR) the composition is skewed to polar residues. The interval 1000–2928 (GKITKMPCQS…ASFQELSQTP (1929 aa)) is 16 X 122 AA approximate repeats. 6 K167R repeats span residues 1001–1112 (KITK…FQTP), 1123–1234 (KTTK…FQTP), 1245–1356 (KTTK…FQTP), 1367–1477 (KTTK…FQTP), 1488–1597 (KTTK…LFQT), and 1609–1720 (KTAK…FQTP). Position 1017 is a phosphothreonine (Thr1017). Residues Lys1022 and Lys1035 each participate in a glycyl lysine isopeptide (Lys-Gly) (interchain with G-Cter in SUMO2) cross-link. The tract at residues 1045–1073 (TRTSGETTHTHREPAGDGKSIRTFKESPK) is disordered. The segment covering 1052–1072 (THTHREPAGDGKSIRTFKESP) has biased composition (basic and acidic residues). Ser1071 is subject to Phosphoserine. The residue at position 1091 (Thr1091) is a Phosphothreonine. A Glycyl lysine isopeptide (Lys-Gly) (interchain with G-Cter in SUMO1); alternate cross-link involves residue Lys1093. Residue Lys1093 forms a Glycyl lysine isopeptide (Lys-Gly) (interchain with G-Cter in SUMO2); alternate linkage. At Ser1098 the chain carries Phosphoserine. Residues 1109-1151 (FQTPGPSEESMTDEKTTKIACKSPPPESVDTPTSTKQWPKRSL) are disordered. Thr1111 carries the phosphothreonine modification. At Ser1131 the chain carries Phosphoserine. Position 1139 is a phosphothreonine (Thr1139). A Phosphoserine modification is found at Ser1142. Thr1167 bears the Phosphothreonine mark. A Phosphoserine modification is found at Ser1169. Thr1176 is subject to Phosphothreonine. Residues Lys1185 and Lys1188 each participate in a glycyl lysine isopeptide (Lys-Gly) (interchain with G-Cter in SUMO2) cross-link. Thr1193 is modified (phosphothreonine). Ser1207 bears the Phosphoserine mark. Position 1233 is a phosphothreonine (Thr1233). The segment at 1246–1276 (TTKIPCDSPQSDPVDTPTSTKQRPKRSIRKA) is disordered. A phosphoserine mark is found at Ser1253 and Ser1256. Residues 1253 to 1266 (SPQSDPVDTPTSTK) show a composition bias toward polar residues. Residues Thr1261, Thr1298, Thr1315, and Thr1327 each carry the phosphothreonine modification. Positions 1323 to 1518 (TENLTGSKRR…PQSKRSLRKV (196 aa)) are disordered. Ser1329 bears the Phosphoserine mark. The residue at position 1335 (Thr1335) is a Phosphothreonine. Residue Lys1337 forms a Glycyl lysine isopeptide (Lys-Gly) (interchain with G-Cter in SUMO2) linkage. A Phosphothreonine modification is found at Thr1355. Ser1376 bears the Phosphoserine mark. Thr1383 bears the Phosphothreonine mark. Ser1386 bears the Phosphoserine mark. Composition is skewed to basic and acidic residues over residues 1394-1406 (PLEK…ELSA) and 1418-1442 (THTD…KQKL). A phosphothreonine mark is found at Thr1420 and Thr1437. Ser1496 is subject to Phosphoserine. Thr1503 bears the Phosphothreonine mark. Ser1506 is modified (phosphoserine). A Phosphothreonine modification is found at Thr1540. Tyr1552 carries the post-translational modification Phosphotyrosine. Phosphothreonine is present on residues Thr1557 and Thr1569. A phosphoserine mark is found at Ser1571 and Ser1617. The disordered stretch occupies residues 1597–1675 (TRGHTEESMT…PTGDGKSMKA (79 aa)). The residue at position 1639 (Lys1639) is an N6-acetyllysine. A Glycyl lysine isopeptide (Lys-Gly) (interchain with G-Cter in SUMO2) cross-link involves residue Lys1643. Basic and acidic residues predominate over residues 1660-1672 (THTHTEPTGDGKS). Phosphoserine occurs at positions 1679 and 1689. Disordered regions lie at residues 1689-1708 (SLTG…EVPE), 1717-1765 (FQTP…ADTE), 1771-1790 (FRKQ…PAVG), 1801-1824 (TPVQ…TRKE), and 1839-1886 (FQTP…KADV). Lys1703 participates in a covalent cross-link: Glycyl lysine isopeptide (Lys-Gly) (interchain with G-Cter in SUMO2). Thr1719 carries the post-translational modification Phosphothreonine. Residue Ser1721 is modified to Phosphoserine. Residues 1722–1733 (HTKESMTNEKTT) are compositionally biased toward basic and acidic residues. K167R repeat units lie at residues 1731 to 1842 (KTTK…FQTP), 1854 to 1964 (TKKI…FQTP), 1975 to 2086 (KITE…FQTP), 2097 to 2204 (KTTK…FQTP), and 2215 to 2326 (KTTK…FQTP). Residue Ser1740 is modified to Phosphoserine. Phosphothreonine is present on residues Thr1747, Thr1764, Thr1784, and Thr1801. Phosphoserine is present on Ser1815. Phosphothreonine is present on Thr1841. A phosphoserine mark is found at Ser1861 and Ser1864. A compositionally biased stretch (polar residues) spans 1861-1874 (SPQSDPADTPTNTK). Residues Thr1869, Thr1897, Thr1906, and Thr1923 each carry the phosphothreonine modification. The residue at position 1937 (Ser1937) is a Phosphoserine. Residues 1961 to 2002 (FQTPGHTEESMTDDKITEVSCKSPQPDPVKTPTSSKQRLKIS) are disordered. Thr1963 carries the post-translational modification Phosphothreonine. A compositionally biased stretch (basic and acidic residues) spans 1966–1977 (HTEESMTDDKIT). Residue Ser1983 is modified to Phosphoserine. Lys2005 carries the N6-acetyllysine modification. Lys2009 is covalently cross-linked (Glycyl lysine isopeptide (Lys-Gly) (interchain with G-Cter in SUMO1); alternate). Residue Lys2009 forms a Glycyl lysine isopeptide (Lys-Gly) (interchain with G-Cter in SUMO2); alternate linkage. The interval 2017-2192 (KLTQTSGKTT…TPKGKAQPLE (176 aa)) is disordered. Residues Thr2028 and Thr2065 each carry the phosphothreonine modification. 2 stretches are compositionally biased toward basic and acidic residues: residues 2028–2046 (THRE…KESA) and 2061–2070 (RWPRTPKEEA). Residue Lys2067 forms a Glycyl lysine isopeptide (Lys-Gly) (interchain with G-Cter in SUMO1); alternate linkage. Lys2067 is covalently cross-linked (Glycyl lysine isopeptide (Lys-Gly) (interchain with G-Cter in SUMO2); alternate). Ser2072 is modified (phosphoserine). Position 2085 is a phosphothreonine (Thr2085). Residues 2087-2099 (DHTEESTTDDKTT) are compositionally biased toward basic and acidic residues. At Ser2105 the chain carries Phosphoserine. Thr2113 bears the Phosphothreonine mark. Residues Ser2116 and Ser2135 each carry the phosphoserine modification. Residues 2145 to 2168 (HTDKVPGDEDKGINVFRETAKQKL) are compositionally biased toward basic and acidic residues. 3 positions are modified to phosphothreonine: Thr2146, Thr2163, and Thr2203. A disordered region spans residues 2205–2400 (ICTDKPTTHE…KPAVSDEKNI (196 aa)). Residue Ser2223 is modified to Phosphoserine. Phosphothreonine is present on residues Thr2231 and Thr2233. Ser2239 carries the post-translational modification Phosphoserine. Thr2259 is subject to Phosphothreonine. Ser2261 bears the Phosphoserine mark. A phosphothreonine mark is found at Thr2268, Thr2285, Thr2325, Thr2328, and Thr2333. 5 K167R repeats span residues 2336-2447 (KTTK…FQTP), 2458-2569 (KITE…FSAP), 2580-2688 (KNTK…LSET), 2700-2805 (KATK…GFKD), and 2819-2928 (KTTK…SQTP). Ser2344 bears the Phosphoserine mark. A phosphothreonine mark is found at Thr2352 and Thr2389. The residue at position 2395 (Ser2395) is a Phosphoserine. A Phosphothreonine modification is found at Thr2406. The residue at position 2420 (Ser2420) is a Phosphoserine. 2 positions are modified to phosphothreonine: Thr2426 and Thr2446. Residues 2445 to 2480 (QTPGHTEESMTDDKITEVSCKSPQPESFKTSRSSKQ) are disordered. Over residues 2449–2460 (HTEESMTDDKIT) the composition is skewed to basic and acidic residues. The span at 2463 to 2475 (SCKSPQPESFKTS) shows a compositional bias: polar residues. Ser2466 is modified (phosphoserine). Residue Lys2492 forms a Glycyl lysine isopeptide (Lys-Gly) (interchain with G-Cter in SUMO1) linkage. The interval 2497–2521 (AVSKLTRTSGETTQTHTEPTGDSKS) is disordered. The span at 2501–2514 (LTRTSGETTQTHTE) shows a compositional bias: polar residues. Residues Ser2505, Ser2528, and Ser2588 each carry the phosphoserine modification. The tract at residues 2570–3256 (GHTEESMTID…TRSHRDSEDI (687 aa)) is disordered. Basic and acidic residues-rich tracts occupy residues 2609 to 2618 (RKEVKEELSA), 2632 to 2644 (THKE…EGIK), and 2660 to 2675 (EPSR…KAQP). Lys2613 participates in a covalent cross-link: Glycyl lysine isopeptide (Lys-Gly) (interchain with G-Cter in SUMO1); alternate. Lys2613 is covalently cross-linked (Glycyl lysine isopeptide (Lys-Gly) (interchain with G-Cter in SUMO2); alternate). Ser2638 bears the Phosphoserine mark. A compositionally biased stretch (polar residues) spans 2685 to 2696 (LSETSGHTQESL). The residue at position 2708 (Ser2708) is a Phosphoserine. Lys2734 is covalently cross-linked (Glycyl lysine isopeptide (Lys-Gly) (interchain with G-Cter in SUMO1); alternate). A Glycyl lysine isopeptide (Lys-Gly) (interchain with G-Cter in SUMO2); alternate cross-link involves residue Lys2734. Composition is skewed to basic and acidic residues over residues 2751–2770 (DADK…KESA) and 2810–2821 (HTEESMTDDKTT). A phosphoserine mark is found at Ser2827, Ser2828, and Ser2838. Lys2852 is covalently cross-linked (Glycyl lysine isopeptide (Lys-Gly) (interchain with G-Cter in SUMO1); alternate). A Glycyl lysine isopeptide (Lys-Gly) (interchain with G-Cter in SUMO2); alternate cross-link involves residue Lys2852. Positions 2869 to 2881 (THTDKEPVGEGKG) are enriched in basic and acidic residues. The segment covering 2941 to 2951 (SFTSAPKQTPD) has biased composition (polar residues). Lys2967 is covalently cross-linked (Glycyl lysine isopeptide (Lys-Gly) (interchain with G-Cter in SUMO2)). The span at 2982–2991 (KSQSKSNTSL) shows a compositional bias: polar residues. Lys2986 carries the N6-acetyllysine modification. A compositionally biased stretch (basic residues) spans 3029-3039 (KKQRVAPRARG). 3034-3041 (APRARGKS) is an ATP binding site. Ser3041 bears the Phosphoserine mark. Basic and acidic residues-rich tracts occupy residues 3071-3080 (KTNKEEHKLQ) and 3113-3124 (ERIEINRNEKKP). Phosphoserine is present on Ser3128. The span at 3138 to 3154 (DGARKPIPRDKVTENKR) shows a compositional bias: basic and acidic residues. A compositionally biased stretch (polar residues) spans 3207 to 3223 (SQPAASTLESKSVQRVT). Basic and acidic residues predominate over residues 3228 to 3241 (RCAENPKKAEDNVC).

As to quaternary structure, interacts with KIF15. Interacts (via the FHA domain) with NIFK. Interacts with PPP1CC. Component of a complex at least composed of ZNF335, HCFC1, CCAR2, EMSY, MKI67, RBBP5, ASH2L and WDR5; the complex is formed as a result of interactions between components of a nuclear receptor-mediated transcription complex and a histone methylation complex. Interacts with ZNF335. Hyperphosphorylated by CDK1 in mitosis; hyperphosphorylatiom prevents undergoing liquid-liquid phase separation. Dephosphorylated by PPP1CC at the onset of anaphase. Dephosphorylated by protein phosphatase 2A (PP2A) at the onset of anaphase. Dephosphorylation by protein phosphatase 2A (PP2A) and simultaneous exposure of the positively charged patch (CP) during mitotic exit induce the RNA-dependent formation of a liquid-like condensed phase on the chromosome surface. Post-translationally, ubiquitinated by the APC/C complex after neuronal progenitors exit mitosis during brain development, leading to clearance from constitutive heterochromatin.

The protein resides in the chromosome. It is found in the nucleus. It localises to the nucleolus. Protein that associates with the surface of mitotic chromosomes and acts both as a chromosome repellent during early mitosis and chromosome attractant during late mitosis. Required to maintain individual mitotic chromosomes dispersed in the cytoplasm following nuclear envelope disassembly. During early mitosis, relocalizes from nucleoli to the chromosome surface where it forms extended brush structures that cover a substantial fraction of the chromosome surface. The MKI67 brush structure prevents chromosomes from collapsing into a single chromatin mass by forming a steric and electrostatic charge barrier: the protein has a high net electrical charge and acts as a surfactant, dispersing chromosomes and enabling independent chromosome motility. During mitotic anaphase, the MKI67 brush structure collapses and MKI67 switches from a chromosome repellent to a chromosome attractant to promote chromosome clustering and facilitate the exclusion of large cytoplasmic particles from the future nuclear space. Mechanistically, dephosphorylation during mitotic exit and simultaneous exposure of a conserved basic patch induce the RNA-dependent formation of a liquid-like condensed phase on the chromosome surface, promoting coalescence of neighboring chromosome surfaces and clustering of chromosomes. Binds premature ribosomal RNAs during anaphase; promoting liquid-liquid phase separation. Binds DNA, with a preference for supercoiled DNA and AT-rich DNA. Does not contribute to the internal structure of mitotic chromosomes. May play a role in chromatin organization; it is however unclear whether it plays a direct role in chromatin organization or whether it is an indirect consequence of its function in mitotic chromosome. The chain is Proliferation marker protein Ki-67 from Homo sapiens (Human).